A 620-amino-acid chain; its full sequence is Zinc finger protein GLIS1 (620 aa).

A disordered region spans residues 108-132 (PLTGDLGGPSKRARPGPASTDSHEG). The C2H2-type 1 zinc-finger motif lies at 195–220 (QACRWVDCCAAYEQQEELVRHIEKSH). The C2H2-type 2; atypical zinc-finger motif lies at 229 to 256 (FTCFWAGCVRRYKPFNARYKLLIHMRVH). 3 consecutive C2H2-type zinc fingers follow at residues 262-286 (NKCM…LRSH), 292-316 (YLCQ…QRTH), and 322-346 (YACQ…VKAH). A Bipartite nuclear localization signal motif is present at residues 340–356 (RKHVKAHSAKEQQVRKK). The tract at residues 414-515 (ASGLLPPAHD…PPLPSPQGYQ (102 aa)) is disordered. Residues 477 to 488 (SSQSHSPGGQPF) show a composition bias toward low complexity. Residues 489–510 (PTLPSKPSYPPFQSPPPPPLPS) show a composition bias toward pro residues.

Belongs to the GLI C2H2-type zinc-finger protein family. Interacts with KLF4. Interacts with POU5F1 and/or POU5F1B. Interacts with SOX2.

The protein resides in the nucleus. Its function is as follows. Acts both as a repressor and an activator of transcription. Binds to the consensus sequence 5'-GACCACCCAC-3'. By controlling the expression of genes involved in cell differentiation inhibits the lineage commitment of multipotent cells. Prevents, for instance, the differentiation of multipotent mesenchymal cells into adipocyte and osteoblast. The protein is Zinc finger protein GLIS1 of Homo sapiens (Human).